The sequence spans 330 residues: Aspartate--ammonia ligase (330 aa).

This sequence belongs to the class-II aminoacyl-tRNA synthetase family. AsnA subfamily.

The protein resides in the cytoplasm. The enzyme catalyses L-aspartate + NH4(+) + ATP = L-asparagine + AMP + diphosphate + H(+). It participates in amino-acid biosynthesis; L-asparagine biosynthesis; L-asparagine from L-aspartate (ammonia route): step 1/1. The sequence is that of Aspartate--ammonia ligase from Salmonella schwarzengrund (strain CVM19633).